Consider the following 93-residue polypeptide: WAP four-disulfide core domain protein 13 (93 aa).

The signal sequence occupies residues 1 to 22 (MKPVLPLQFLVVFCLALQLVPG). A WAP; atypical domain is found at 24-73 (PKQRVLKYILEPPPCISAPENCTHLCTMQEDCEKGFQCCSSFCGIVCSSE). 3 cysteine pairs are disulfide-bonded: cysteine 45–cysteine 66, cysteine 49–cysteine 61, and cysteine 55–cysteine 70.

It localises to the secreted. Functionally, putative acid-stable proteinase inhibitor. This is WAP four-disulfide core domain protein 13 (WFDC13) from Homo sapiens (Human).